We begin with the raw amino-acid sequence, 944 residues long: Neutral alpha-glucosidase AB (944 aa).

Residues 1-32 (MAAVAAVAARRRRSWTGLVLACLGVCLGLTLA) form the signal peptide. An intrachain disulfide couples C41 to C47. S52 bears the Phosphoserine mark. N-linked (GlcNAc...) asparagine glycosylation occurs at N97. Residues 181-225 (QRAPRVSQGSKDPAEGDGAQPEEAPGDGDKPEEIQGKAEKDEPGA) form a disordered region. Residues 207–225 (DGDKPEEIQGKAEKDEPGA) are compositionally biased toward basic and acidic residues. Substrate is bound by residues D283 and D429. The active-site Nucleophile is D542. R602 serves as a coordination point for substrate. D618 functions as the Proton donor in the catalytic mechanism. A disulfide bridge links C633 with C644. Residue H676 participates in substrate binding.

Belongs to the glycosyl hydrolase 31 family. Heterodimer of a catalytic alpha subunit (GANAB) and a beta subunit (PRKCSH). Binds glycosylated PTPRC. Contains sialylated polysaccharide chains.

It is found in the endoplasmic reticulum. The protein resides in the golgi apparatus. It localises to the melanosome. It carries out the reaction N(4)-(alpha-D-Glc-(1-&gt;3)-alpha-D-Man-(1-&gt;2)-alpha-D-Man-(1-&gt;2)-alpha-D-Man-(1-&gt;3)-[alpha-D-Man-(1-&gt;2)-alpha-D-Man-(1-&gt;3)-[alpha-D-Man-(1-&gt;2)-alpha-D-Man-(1-&gt;6)]-alpha-D-Man-(1-&gt;6)]-beta-D-Man-(1-&gt;4)-beta-D-GlcNAc-(1-&gt;4)-beta-D-GlcNAc)-L-asparaginyl-[protein] + H2O = N(4)-(alpha-D-Man-(1-&gt;2)-alpha-D-Man-(1-&gt;2)-alpha-D-Man-(1-&gt;3)-[alpha-D-Man-(1-&gt;2)-alpha-D-Man-(1-&gt;3)-[alpha-D-Man-(1-&gt;2)-alpha-D-Man-(1-&gt;6)]-alpha-D-Man-(1-&gt;6)]-beta-D-Man-(1-&gt;4)-beta-D-GlcNAc-(1-&gt;4)-beta-D-GlcNAc)-L-asparaginyl-[protein] (N-glucan mannose isomer 9A1,2,3B1,2,3) + beta-D-glucose. The enzyme catalyses N(4)-(alpha-D-Glc-(1-&gt;3)-alpha-D-Glc-(1-&gt;3)-alpha-D-Man-(1-&gt;2)-alpha-D-Man-(1-&gt;2)-alpha-D-Man-(1-&gt;3)-[alpha-D-Man-(1-&gt;2)-alpha-D-Man-(1-&gt;3)-[alpha-D-Man-(1-&gt;2)-alpha-D-Man-(1-&gt;6)]-alpha-D-Man-(1-&gt;6)]-beta-D-Man-(1-&gt;4)-beta-D-GlcNAc-(1-&gt;4)-beta-D-GlcNAc)-L-asparaginyl-[protein] + H2O = N(4)-(alpha-D-Glc-(1-&gt;3)-alpha-D-Man-(1-&gt;2)-alpha-D-Man-(1-&gt;2)-alpha-D-Man-(1-&gt;3)-[alpha-D-Man-(1-&gt;2)-alpha-D-Man-(1-&gt;3)-[alpha-D-Man-(1-&gt;2)-alpha-D-Man-(1-&gt;6)]-alpha-D-Man-(1-&gt;6)]-beta-D-Man-(1-&gt;4)-beta-D-GlcNAc-(1-&gt;4)-beta-D-GlcNAc)-L-asparaginyl-[protein] + beta-D-glucose. It participates in glycan metabolism; N-glycan metabolism. In terms of biological role, catalytic subunit of glucosidase II that cleaves sequentially the 2 innermost alpha-1,3-linked glucose residues from the Glc(2)Man(9)GlcNAc(2) oligosaccharide precursor of immature glycoproteins. Required for PKD1/Polycystin-1 and PKD2/Polycystin-2 maturation and localization to the cell surface and cilia. The sequence is that of Neutral alpha-glucosidase AB (GANAB) from Sus scrofa (Pig).